Reading from the N-terminus, the 323-residue chain is Beta-ketoacyl-[acyl-carrier-protein] synthase III (323 aa).

Active-site residues include Cys113 and His250. The segment at Gln251–Arg255 is ACP-binding. The active site involves Asn280.

The protein belongs to the thiolase-like superfamily. FabH family. In terms of assembly, homodimer.

It is found in the cytoplasm. It carries out the reaction malonyl-[ACP] + acetyl-CoA + H(+) = 3-oxobutanoyl-[ACP] + CO2 + CoA. Its pathway is lipid metabolism; fatty acid biosynthesis. In terms of biological role, catalyzes the condensation reaction of fatty acid synthesis by the addition to an acyl acceptor of two carbons from malonyl-ACP. Catalyzes the first condensation reaction which initiates fatty acid synthesis and may therefore play a role in governing the total rate of fatty acid production. Possesses both acetoacetyl-ACP synthase and acetyl transacylase activities. Its substrate specificity determines the biosynthesis of branched-chain and/or straight-chain of fatty acids. The polypeptide is Beta-ketoacyl-[acyl-carrier-protein] synthase III (Rhizobium rhizogenes (strain K84 / ATCC BAA-868) (Agrobacterium radiobacter)).